We begin with the raw amino-acid sequence, 338 residues long: MRRLNRKNSDASKKLNDRQRKVLYCIVREYIENKKPVSSQRVLEVSNIEFSSATIRNDMKKLEYLGYIYQPHTSAGRIPTDKGLRFYYEEMLKISKETSEADLAVETFKSMPLADPEKVLFLAGNLLARLTEGYVLIERPNTRDLKILRVMLIPVSEDYLIFSILTEFGVSRVTPIKTQERLNWEEIERQLNFLLRGKTIGEVLLGRIESLKGSGFLRLIESLIGETIERYLDAGLENLLKDETLALEDIRNLLEEIKDQKFLESLVGEGISVMIGREIGRKNLEKFAVFSGRYFKGESPIGSVYFFTSKVTRYDRNHKIFEYILNRLSEYFTSTSRR.

The protein belongs to the HrcA family.

In terms of biological role, negative regulator of class I heat shock genes (grpE-dnaK-dnaJ and groELS operons). Prevents heat-shock induction of these operons. The protein is Heat-inducible transcription repressor HrcA of Thermotoga petrophila (strain ATCC BAA-488 / DSM 13995 / JCM 10881 / RKU-1).